Consider the following 68-residue polypeptide: Large ribosomal subunit protein bL31 (68 aa).

4 residues coordinate Zn(2+): Cys17, Cys19, Cys37, and Cys40.

It belongs to the bacterial ribosomal protein bL31 family. Type A subfamily. As to quaternary structure, part of the 50S ribosomal subunit. It depends on Zn(2+) as a cofactor.

Its function is as follows. Binds the 23S rRNA. The polypeptide is Large ribosomal subunit protein bL31 (Clostridium perfringens (strain ATCC 13124 / DSM 756 / JCM 1290 / NCIMB 6125 / NCTC 8237 / Type A)).